Here is a 279-residue protein sequence, read N- to C-terminus: Tryptophan prenyltransferase ComQ (279 aa).

Residues Asp-67 and Asp-71 each coordinate Mg(2+).

Belongs to the FPP/GGPP synthase family. Requires Mg(2+) as cofactor.

It is found in the cell membrane. It carries out the reaction L-tryptophyl-[protein] + (2E)-geranyl diphosphate = (2S,3R)-3-geranyl-2,3-dihydro-2,N(alpha)-cyclo-L-tryptophyl-[protein] + diphosphate. In terms of biological role, part of a major quorum-sensing system that regulates the development of genetic competence. Involved in the maturation of the competence pheromone ComX. Acts by catalyzing the transfer of a geranyl group on the ComX pheromone. Cannot use farnesyl diphosphate (FPP). The sequence is that of Tryptophan prenyltransferase ComQ from Bacillus spizizenii (Bacillus subtilis subsp. spizizenii).